A 645-amino-acid polypeptide reads, in one-letter code: Bifurcating [FeFe] hydrogenase alpha subunit (645 aa).

Residues 1–76 (MKIYVDGREV…GMKVKTNTPE (76 aa)) form the 2Fe-2S ferredoxin-type domain. Residues Cys34, Cys45, Cys48, and Cys60 each contribute to the [2Fe-2S] cluster site. Residues 76-115 (EIYEMRRNILELILATHNRDCTTCDRNGSCKLQKYAEDFG) enclose the 4Fe-4S His(Cys)3-ligated-type domain. Residues His92, Cys96, Cys99, Cys105, Cys143, Cys146, Cys149, Cys153, Cys186, Cys189, Cys192, Cys196, Cys295, Cys350, Cys482, and Cys486 each coordinate [4Fe-4S] cluster. 4Fe-4S ferredoxin-type domains are found at residues 133–164 (SAPV…VIEF) and 178–206 (DTPL…IRND). Cys486 is a Fe(2+) binding site. [2Fe-2S] cluster contacts are provided by Cys575, Cys580, Cys612, and Cys616.

As to quaternary structure, heterotrimer composed of HydA (alpha subunit), HydB (beta subunit) and HydC (gamma subunit). Near neutral and acidic pH conditions favor oligomerization of the heterotrimeric holoenzyme. [2Fe-2S] cluster serves as cofactor. It depends on [4Fe-4S] cluster as a cofactor. Fe(2+) is required as a cofactor.

The protein localises to the cytoplasm. It catalyses the reaction 2 H2 + 2 oxidized [2Fe-2S]-[ferredoxin] + NAD(+) = 2 reduced [2Fe-2S]-[ferredoxin] + NADH + 3 H(+). Catalyzes the oxidation of the physiological electron carriers NADH and reduced ferredoxin, coupled to the production of H(2). Acts as a bifurcating [FeFe] hydrogenase, which uses the exergonic oxidation of reduced ferredoxin to drive the unfavorable oxidation of NADH to produce H(2). The alpha subunit contains the catalytic H-cluster. This is Bifurcating [FeFe] hydrogenase alpha subunit from Thermotoga maritima (strain ATCC 43589 / DSM 3109 / JCM 10099 / NBRC 100826 / MSB8).